Reading from the N-terminus, the 67-residue chain is Protein SlyX homolog (67 aa).

It belongs to the SlyX family.

The sequence is that of Protein SlyX homolog from Mesorhizobium japonicum (strain LMG 29417 / CECT 9101 / MAFF 303099) (Mesorhizobium loti (strain MAFF 303099)).